Consider the following 394-residue polypeptide: Argininosuccinate synthase (394 aa).

An ATP-binding site is contributed by 8–16 (AYSGGLDTS). 2 residues coordinate L-citrulline: Y86 and S91. G116 is an ATP binding site. L-aspartate-binding residues include T118, N122, and D123. N122 contributes to the L-citrulline binding site. Positions 126, 172, 181, 257, and 269 each coordinate L-citrulline.

It belongs to the argininosuccinate synthase family. Type 1 subfamily. In terms of assembly, homotetramer.

The protein localises to the cytoplasm. The catalysed reaction is L-citrulline + L-aspartate + ATP = 2-(N(omega)-L-arginino)succinate + AMP + diphosphate + H(+). Its pathway is amino-acid biosynthesis; L-arginine biosynthesis; L-arginine from L-ornithine and carbamoyl phosphate: step 2/3. The polypeptide is Argininosuccinate synthase (Methanosarcina mazei (strain ATCC BAA-159 / DSM 3647 / Goe1 / Go1 / JCM 11833 / OCM 88) (Methanosarcina frisia)).